The following is a 48-amino-acid chain: ATP synthase protein 8 (48 aa).

The chain crosses the membrane as a helical span at residues 13–32 (LVYGFALVTILLVLFAQYFL).

It belongs to the ATPase protein 8 family. In terms of assembly, F-type ATPases have 2 components, CF(1) - the catalytic core - and CF(0) - the membrane proton channel.

Its subcellular location is the mitochondrion membrane. In terms of biological role, mitochondrial membrane ATP synthase (F(1)F(0) ATP synthase or Complex V) produces ATP from ADP in the presence of a proton gradient across the membrane which is generated by electron transport complexes of the respiratory chain. F-type ATPases consist of two structural domains, F(1) - containing the extramembraneous catalytic core and F(0) - containing the membrane proton channel, linked together by a central stalk and a peripheral stalk. During catalysis, ATP synthesis in the catalytic domain of F(1) is coupled via a rotary mechanism of the central stalk subunits to proton translocation. Part of the complex F(0) domain. Minor subunit located with subunit a in the membrane. This chain is ATP synthase protein 8 (ATP8), found in Kluyveromyces lactis (strain ATCC 8585 / CBS 2359 / DSM 70799 / NBRC 1267 / NRRL Y-1140 / WM37) (Yeast).